The chain runs to 492 residues: N-succinylglutamate 5-semialdehyde dehydrogenase (492 aa).

220–225 contributes to the NAD(+) binding site; sequence GSANTG. Active-site residues include glutamate 243 and cysteine 277.

Belongs to the aldehyde dehydrogenase family. AstD subfamily.

It catalyses the reaction N-succinyl-L-glutamate 5-semialdehyde + NAD(+) + H2O = N-succinyl-L-glutamate + NADH + 2 H(+). It functions in the pathway amino-acid degradation; L-arginine degradation via AST pathway; L-glutamate and succinate from L-arginine: step 4/5. Functionally, catalyzes the NAD-dependent reduction of succinylglutamate semialdehyde into succinylglutamate. The protein is N-succinylglutamate 5-semialdehyde dehydrogenase of Escherichia coli O6:K15:H31 (strain 536 / UPEC).